The following is a 68-amino-acid chain: Figainin 1 (68 aa).

Positions 1 to 22 (MAFLKKSLFLVLFLGLVSLSIG) are cleaved as a signal peptide. The segment at 23 to 45 (EEEKREEEEKNEEGANQEENAEN) is disordered. The propeptide occupies 23–47 (EEEKREEEEKNEEGANQEENAENKE). The span at 26 to 42 (KREEEEKNEEGANQEEN) shows a compositional bias: acidic residues. Lys-67 bears the Lysine amide mark.

As to expression, expressed by the skin glands.

It is found in the secreted. In terms of biological role, antimicrobial peptide that displays antibacterial and antiprotozoal activity. Exhibits antibacterial activity against the Gram-positive bacteria S.epidermidis ATCC 12228 (MIC=2 uM), E.casseliflavus ATCC 700327 (MIC=16 uM), S.aureus ATCC 25923 (MIC=4 uM) and E.faecalis ATCC 29212 (MIC=8 uM), and the Gram-negative bacteria E.coli ATCC 25922 (MIC=16 uM) and K.pneumoniae ATCC 13883 (MIC=4 uM). Displays antiprotozoal activity against the epimastigote form of T.cruzi (IC(50)=15.9 uM). Does not show antimicrobial activity against the Gram-negative bacterium P.aeruginosa ATCC 27853, or the fungi C.albicans ATCC 90028 and C.parapsilosis ATCC 22019. Shows high cytolytic activity against human erythrocytes (HC(50)=10 uM), and displays anti-proliferative effects against various cancer cell lines including MCF-7 breast cancer cells (IC(50)=13.7 uM), HeLa cervical adenocarcinoma cells (IC(50)=11.1 uM) and B16F10 murine melanoma cells (IC(50)=10.5 uM). The chain is Figainin 1 from Boana raniceps (Chaco tree frog).